We begin with the raw amino-acid sequence, 514 residues long: Putative thymidine phosphorylase (514 aa).

It belongs to the thymidine/pyrimidine-nucleoside phosphorylase family. Type 2 subfamily.

It carries out the reaction thymidine + phosphate = 2-deoxy-alpha-D-ribose 1-phosphate + thymine. The polypeptide is Putative thymidine phosphorylase (Rhodopseudomonas palustris (strain ATCC BAA-98 / CGA009)).